Here is a 364-residue protein sequence, read N- to C-terminus: 1-aminocyclopropane-1-carboxylate oxidase homolog 11 (364 aa).

One can recognise a Fe2OG dioxygenase domain in the interval 213 to 312 (KSLLMICHYY…RISVASFFSS (100 aa)). His237, Asp239, and His293 together coordinate Fe cation. Arg303 is a 2-oxoglutarate binding site.

The protein belongs to the iron/ascorbate-dependent oxidoreductase family. It depends on Fe(2+) as a cofactor.

The protein is 1-aminocyclopropane-1-carboxylate oxidase homolog 11 of Arabidopsis thaliana (Mouse-ear cress).